The chain runs to 524 residues: 2-isopropylmalate synthase (524 aa).

In terms of domain architecture, Pyruvate carboxyltransferase spans 5-267 (VIIFDTTLRD…HTNIRHSEIH (263 aa)). Mn(2+) contacts are provided by Asp-14, His-202, His-204, and Asn-238. The regulatory domain stretch occupies residues 392 to 524 (KLEYLGVQSG…KTDKINTESV (133 aa)).

This sequence belongs to the alpha-IPM synthase/homocitrate synthase family. LeuA type 1 subfamily. In terms of assembly, homodimer. The cofactor is Mn(2+).

It is found in the cytoplasm. It catalyses the reaction 3-methyl-2-oxobutanoate + acetyl-CoA + H2O = (2S)-2-isopropylmalate + CoA + H(+). The protein operates within amino-acid biosynthesis; L-leucine biosynthesis; L-leucine from 3-methyl-2-oxobutanoate: step 1/4. Its function is as follows. Catalyzes the condensation of the acetyl group of acetyl-CoA with 3-methyl-2-oxobutanoate (2-ketoisovalerate) to form 3-carboxy-3-hydroxy-4-methylpentanoate (2-isopropylmalate). The sequence is that of 2-isopropylmalate synthase from Aeromonas salmonicida (strain A449).